The chain runs to 159 residues: Ribonuclease H (159 aa).

The 145-residue stretch at 1–145 folds into the RNase H type-1 domain; the sequence is MTHIRAIYTD…CDLIARRLSR (145 aa). The Mg(2+) site is built by Asp10, Glu49, Asp74, and Asp137.

Belongs to the RNase H family. As to quaternary structure, monomer. Mg(2+) serves as cofactor.

The protein localises to the cytoplasm. It carries out the reaction Endonucleolytic cleavage to 5'-phosphomonoester.. Endonuclease that specifically degrades the RNA of RNA-DNA hybrids. The chain is Ribonuclease H from Thermosynechococcus vestitus (strain NIES-2133 / IAM M-273 / BP-1).